The primary structure comprises 314 residues: Small ribosomal subunit protein RACK1 (314 aa).

Position 10 is a phosphothreonine (Thr-10). The WD 1 repeat unit spans residues 13–44 (GHSGWVTSLSTAPENPDILLSGSRDKSIILWN). A Phosphoserine modification is found at Ser-39. Tyr-52 is subject to Phosphotyrosine. WD repeat units follow at residues 61–91 (GHSH…RLWD), 103–133 (GHTS…KIWN), 146–178 (GHSD…KVWD), 190–220 (GHTG…MLWD), 231–260 (EAKA…RIFD), and 281–311 (SSEP…RVWQ). A Phosphoserine modification is found at Ser-148. Phosphoserine occurs at positions 242 and 255.

It belongs to the WD repeat G protein beta family. Ribosomal protein RACK1 subfamily. As to quaternary structure, component of the small ribosomal subunit (SSU). Mature yeast ribosomes consist of a small (40S) and a large (60S) subunit. The 40S small subunit contains 1 molecule of ribosomal RNA (18S rRNA) and at least 33 different proteins. The large 60S subunit contains 3 rRNA molecules (25S, 5.8S and 5S rRNA) and at least 46 different proteins. RACK1 is located at the head of the SSU in the vicinity of the mRNA exit channel. RACK1 interacts with the mRNA-binding protein SCP16. RACK1 also exists simultaneously as a homodimer in a cytosolic non-ribosome-bound form. Interacts with pck2. Interacts with pat1/ran1.

The protein resides in the cytoplasm. Its subcellular location is the membrane. In terms of biological role, component of the ribosome, a large ribonucleoprotein complex responsible for the synthesis of proteins in the cell. The small ribosomal subunit (SSU) binds messenger RNAs (mRNAs) and translates the encoded message by selecting cognate aminoacyl-transfer RNA (tRNA) molecules. The large subunit (LSU) contains the ribosomal catalytic site termed the peptidyl transferase center (PTC), which catalyzes the formation of peptide bonds, thereby polymerizing the amino acids delivered by tRNAs into a polypeptide chain. The nascent polypeptides leave the ribosome through a tunnel in the LSU and interact with protein factors that function in enzymatic processing, targeting, and the membrane insertion of nascent chains at the exit of the ribosomal tunnel. Located at the head of the 40S ribosomal subunit in the vicinity of the mRNA exit channel, RACK1 serves as a scaffold protein that can recruit other proteins to the ribosome. Involved in induction of the ribosome quality control (RQC) pathway; a pathway that degrades nascent peptide chains during problematic translation. Involved in the negative regulation of translation of a specific subset of proteins. May be a receptor for protein kinase C in the regulation of actin cytoskeleton organization during cell wall synthesis and morphogenesis. Involved in the control of G2/M transition. May function as an anchoring protein for pat1/ran1 kinase. Negatively regulates the cell integrity transduction pathway by favoring translation of the tyrosine-phosphatases pyp1 and pyp2 that deactivate pmk1. Positively regulates the synthesis of the stress-responsive transcription factor Atf1 and the cytoplasmic catalase, a detoxificant enzyme induced by treatment with hydrogen peroxide. The polypeptide is Small ribosomal subunit protein RACK1 (Schizosaccharomyces pombe (strain 972 / ATCC 24843) (Fission yeast)).